The following is a 700-amino-acid chain: Acyl-coenzyme A oxidase 2 (700 aa).

This sequence belongs to the acyl-CoA oxidase family. As to quaternary structure, heteropentamer composed of five different subunits. Requires FAD as cofactor.

It localises to the peroxisome. It carries out the reaction a 2,3-saturated acyl-CoA + O2 = a (2E)-enoyl-CoA + H2O2. It participates in lipid metabolism; peroxisomal fatty acid beta-oxidation. Functionally, oxidizes strain chain acyl-CoAs with a chain length of 10 to 14 carbons. Also active toward the 2S isomers of acyl-CoA-esters containing a 2-methyl group. This Yarrowia lipolytica (strain CLIB 122 / E 150) (Yeast) protein is Acyl-coenzyme A oxidase 2 (POX2).